The primary structure comprises 147 residues: Large ribosomal subunit protein uL16 (147 aa).

The protein belongs to the universal ribosomal protein uL16 family. As to quaternary structure, part of the 50S ribosomal subunit.

In terms of biological role, binds 23S rRNA and is also seen to make contacts with the A and possibly P site tRNAs. This chain is Large ribosomal subunit protein uL16, found in Clostridium acetobutylicum (strain ATCC 824 / DSM 792 / JCM 1419 / IAM 19013 / LMG 5710 / NBRC 13948 / NRRL B-527 / VKM B-1787 / 2291 / W).